The following is a 354-amino-acid chain: Replication factor C subunit 5 (354 aa).

40 to 47 (YGPSGSGK) is an ATP binding site.

This sequence belongs to the activator 1 small subunits family. In terms of assembly, heterotetramer of subunits RFC2, RFC3, RFC4 and RFC5 that can form a complex with RFC1. In terms of tissue distribution, expressed in roots, leaves, shoot apical meristem (SAM), flag leaves and panicles.

Its subcellular location is the nucleus. Its function is as follows. May be involved in DNA replication and thus regulate cell proliferation. The chain is Replication factor C subunit 5 (RFC5) from Oryza sativa subsp. japonica (Rice).